Reading from the N-terminus, the 525-residue chain is GMP synthase [glutamine-hydrolyzing] (525 aa).

One can recognise a Glutamine amidotransferase type-1 domain in the interval 9 to 207 (RILILDFGSQ…VRDICQCEAL (199 aa)). The active-site Nucleophile is the Cys86. Residues His181 and Glu183 contribute to the active site. The region spanning 208-400 (WTPAKIIDDA…LGLPYDMLYR (193 aa)) is the GMPS ATP-PPase domain. 235 to 241 (SGGVDSS) contacts ATP.

As to quaternary structure, homodimer.

It catalyses the reaction XMP + L-glutamine + ATP + H2O = GMP + L-glutamate + AMP + diphosphate + 2 H(+). It participates in purine metabolism; GMP biosynthesis; GMP from XMP (L-Gln route): step 1/1. Its function is as follows. Catalyzes the synthesis of GMP from XMP. The protein is GMP synthase [glutamine-hydrolyzing] of Escherichia coli O139:H28 (strain E24377A / ETEC).